The primary structure comprises 352 residues: MLNVMDKFCWLYEKPTCQGQIKALPEHFIVKENLGFEFAGKGEHFMVKIRKVGENTKYVVNELAKACGVKSRDVSWAGLKDRHAVTEQWISVHLPGKADPDLTDFVAEHPGIEVLETTRHDKKLRPGDLVGNWFQIRLLDLTNPEELALKLEQVKMHGVPNYFGQQRFGHGGNNVIKARSWGNDEFRLRDKSKRSFYLSAARSWLFNMVLSTRIEQGSVNSLMVGDCLQNAGEDNCFLAESITEELQASIDKGLVNITAPLVGDNALPTAADAEAFELAIIANEPSLLKLICDNRMRHERRTLLLKPQEMEWQFDGNDVVLSFALPAGCFATSVVRELLVEQEGSTHANIDQ.

Aspartate 81 acts as the Nucleophile in catalysis. Positions 158-306 (GVPNYFGQQR…RHERRTLLLK (149 aa)) constitute a TRUD domain.

The protein belongs to the pseudouridine synthase TruD family.

It catalyses the reaction uridine(13) in tRNA = pseudouridine(13) in tRNA. Responsible for synthesis of pseudouridine from uracil-13 in transfer RNAs. The polypeptide is tRNA pseudouridine synthase D (Photobacterium profundum (strain SS9)).